Consider the following 251-residue polypeptide: Cell division protein ZapD (251 aa).

Belongs to the ZapD family. As to quaternary structure, interacts with FtsZ.

The protein resides in the cytoplasm. Cell division factor that enhances FtsZ-ring assembly. Directly interacts with FtsZ and promotes bundling of FtsZ protofilaments, with a reduction in FtsZ GTPase activity. This chain is Cell division protein ZapD, found in Paraburkholderia phymatum (strain DSM 17167 / CIP 108236 / LMG 21445 / STM815) (Burkholderia phymatum).